The primary structure comprises 322 residues: Ribosomal RNA small subunit methyltransferase H (322 aa).

Residues 47-49, Asp67, Phe93, Asp112, and Gln119 each bind S-adenosyl-L-methionine; that span reads GGH.

Belongs to the methyltransferase superfamily. RsmH family.

Its subcellular location is the cytoplasm. It catalyses the reaction cytidine(1402) in 16S rRNA + S-adenosyl-L-methionine = N(4)-methylcytidine(1402) in 16S rRNA + S-adenosyl-L-homocysteine + H(+). Specifically methylates the N4 position of cytidine in position 1402 (C1402) of 16S rRNA. This chain is Ribosomal RNA small subunit methyltransferase H, found in Stenotrophomonas maltophilia (strain R551-3).